We begin with the raw amino-acid sequence, 226 residues long: Ribonuclease 3 (226 aa).

The 123-residue stretch at I6–D128 folds into the RNase III domain. E41 contributes to the Mg(2+) binding site. The active site involves D45. Positions 114 and 117 each coordinate Mg(2+). Residue E117 is part of the active site. A DRBM domain is found at D155–L225.

Belongs to the ribonuclease III family. As to quaternary structure, homodimer. It depends on Mg(2+) as a cofactor.

It is found in the cytoplasm. The catalysed reaction is Endonucleolytic cleavage to 5'-phosphomonoester.. In terms of biological role, digests double-stranded RNA. Involved in the processing of primary rRNA transcript to yield the immediate precursors to the large and small rRNAs (23S and 16S). Processes some mRNAs, and tRNAs when they are encoded in the rRNA operon. Processes pre-crRNA and tracrRNA of type II CRISPR loci if present in the organism. The protein is Ribonuclease 3 (rnc) of Pantoea ananatis (strain LMG 20103).